Reading from the N-terminus, the 119-residue chain is MECSASAPEGREEAWISFGKHNNRVCLMETRGHGIVGPDPGTLNPEQLEQLRDFKIQTRIANEKYLRTHKEVSLLISGFFREMFLKRPDNILEFAAHYFTDPRLPSRIHMQLIKEKKGT.

Residues K70–L104 form the RIIa domain.

Abundant in tissues rich in highly ciliated cells, such as testis, trachea and olfactory epithelium.

In Mus musculus (Mouse), this protein is RIIa domain-containing protein 1 (Riiad1).